Here is a 766-residue protein sequence, read N- to C-terminus: Single-minded homolog 1 (766 aa).

The bHLH domain occupies 1-53 (MKEKSKNAARTRREKENSEFYELAKLLPLPSAITSQLDKASIIRLTTSYLKMR). PAS domains are found at residues 77–147 (GREL…QPYH) and 218–288 (PPSA…LVKG). The PAC domain maps to 292–335 (TKYYRFLAKHGGWVWVQSYATIVHNSRSSRPHCIVSVNYVLTDT). The Single-minded C-terminal domain maps to 336 to 766 (EYKGLQLSLD…GTSVIITNGS (431 aa)). A compositionally biased stretch (polar residues) spans 353-365 (AFSYTSSSTPTMT). 2 disordered regions span residues 353–431 (AFSY…SQHD) and 528–563 (WDED…EPSK). Positions 368–387 (RKGAKSRLSSSKSKSRTSPY) match the Nuclear localization signal motif. A compositionally biased stretch (low complexity) spans 373 to 385 (SRLSSSKSKSRTS). Over residues 394 to 404 (HTERSESDHDS) the composition is skewed to basic and acidic residues.

As to quaternary structure, efficient DNA binding requires dimerization with another bHLH protein. Heterodimer; forms a heterodimer with ARNT, ARNT2.

The protein localises to the nucleus. Functionally, transcriptional factor that may have pleiotropic effects during embryogenesis and in the adult. This chain is Single-minded homolog 1 (SIM1), found in Pan paniscus (Pygmy chimpanzee).